The sequence spans 176 residues: Phosphopantetheine adenylyltransferase (176 aa).

Ser8 lines the substrate pocket. Residues 8 to 9 (SF) and His16 each bind ATP. Substrate is bound by residues Lys40, Thr72, and Arg86. Residues 87–89 (GLR), Glu97, and 122–128 (YSFLSSS) each bind ATP.

The protein belongs to the bacterial CoaD family. Homohexamer. The cofactor is Mg(2+).

It localises to the cytoplasm. The enzyme catalyses (R)-4'-phosphopantetheine + ATP + H(+) = 3'-dephospho-CoA + diphosphate. The protein operates within cofactor biosynthesis; coenzyme A biosynthesis; CoA from (R)-pantothenate: step 4/5. Functionally, reversibly transfers an adenylyl group from ATP to 4'-phosphopantetheine, yielding dephospho-CoA (dPCoA) and pyrophosphate. This chain is Phosphopantetheine adenylyltransferase, found in Acaryochloris marina (strain MBIC 11017).